The primary structure comprises 143 residues: Deoxyuridine 5'-triphosphate nucleotidohydrolase (143 aa).

Substrate is bound by residues 62 to 64 (RSG), N75, 79 to 81 (TID), and K89.

Belongs to the dUTPase family. Mg(2+) is required as a cofactor.

It carries out the reaction dUTP + H2O = dUMP + diphosphate + H(+). Its pathway is pyrimidine metabolism; dUMP biosynthesis; dUMP from dCTP (dUTP route): step 2/2. Its function is as follows. This enzyme is involved in nucleotide metabolism: it produces dUMP, the immediate precursor of thymidine nucleotides and it decreases the intracellular concentration of dUTP so that uracil cannot be incorporated into DNA. This chain is Deoxyuridine 5'-triphosphate nucleotidohydrolase, found in Clostridium kluyveri (strain ATCC 8527 / DSM 555 / NBRC 12016 / NCIMB 10680 / K1).